Consider the following 394-residue polypeptide: Phosphoglycerate kinase (394 aa).

Substrate contacts are provided by residues Asp-21–Asn-23, Arg-36, His-59–Arg-62, Arg-118, and Arg-151. Ser-183 bears the Phosphoserine mark. ATP is bound by residues Lys-201 and Gly-292. Thr-299 is modified (phosphothreonine). ATP-binding positions include Glu-323 and Gly-350–Ser-353.

The protein belongs to the phosphoglycerate kinase family. In terms of assembly, monomer.

The protein localises to the cytoplasm. The enzyme catalyses (2R)-3-phosphoglycerate + ATP = (2R)-3-phospho-glyceroyl phosphate + ADP. It participates in carbohydrate degradation; glycolysis; pyruvate from D-glyceraldehyde 3-phosphate: step 2/5. This is Phosphoglycerate kinase from Bacillus cereus (strain ZK / E33L).